The chain runs to 298 residues: Ethanolamine ammonia-lyase small subunit (298 aa).

Adenosylcob(III)alamin-binding residues include Val210, Glu231, and Cys261.

The protein belongs to the EutC family. As to quaternary structure, the basic unit is a heterodimer which dimerizes to form tetramers. The heterotetramers trimerize; 6 large subunits form a core ring with 6 small subunits projecting outwards. Adenosylcob(III)alamin serves as cofactor.

Its subcellular location is the bacterial microcompartment. It catalyses the reaction ethanolamine = acetaldehyde + NH4(+). It functions in the pathway amine and polyamine degradation; ethanolamine degradation. In terms of biological role, catalyzes the deamination of various vicinal amino-alcohols to oxo compounds. Allows this organism to utilize ethanolamine as the sole source of nitrogen and carbon in the presence of external vitamin B12. The polypeptide is Ethanolamine ammonia-lyase small subunit (Salmonella schwarzengrund (strain CVM19633)).